The following is a 500-amino-acid chain: Lycopene beta cyclase, chloroplastic (500 aa).

A chloroplast-targeting transit peptide spans Met-1–Gly-81. Position 86–114 (Leu-86–Pro-114) interacts with NAD(+).

Belongs to the lycopene cyclase family.

The protein resides in the plastid. The protein localises to the chloroplast. It catalyses the reaction a carotenoid psi-end group = a carotenoid beta-end derivative. Its pathway is carotenoid biosynthesis; beta-carotene biosynthesis. The protein operates within carotenoid biosynthesis; beta-zeacarotene biosynthesis. Catalyzes the double cyclization reaction which converts lycopene to beta-carotene and neurosporene to beta-zeacarotene. The chain is Lycopene beta cyclase, chloroplastic (LCY1) from Nicotiana tabacum (Common tobacco).